Reading from the N-terminus, the 191-residue chain is UPF0312 protein Shewana3_1179 (191 aa).

Residues 1–22 (MKKQLLAALIGGSLLAPMAASA) form the signal peptide.

Belongs to the UPF0312 family. Type 1 subfamily.

It is found in the periplasm. The chain is UPF0312 protein Shewana3_1179 from Shewanella sp. (strain ANA-3).